Consider the following 913-residue polypeptide: Protein translocase subunit SecA (913 aa).

Residues glutamine 87, 105–109, and aspartate 512 contribute to the ATP site; that span reads GEGKT. The disordered stretch occupies residues 864–913; that stretch reads LDQPEEEPAEVEGQPDVAVASVRTEPKIGRNEPCPCGSGKKYKHCHGQVQ. Zn(2+) contacts are provided by cysteine 897, cysteine 899, cysteine 908, and histidine 909. Residues 903–913 are compositionally biased toward basic residues; sequence KKYKHCHGQVQ.

This sequence belongs to the SecA family. Monomer and homodimer. Part of the essential Sec protein translocation apparatus which comprises SecA, SecYEG and auxiliary proteins SecDF-YajC and YidC. Requires Zn(2+) as cofactor.

It localises to the cell inner membrane. Its subcellular location is the cytoplasm. The enzyme catalyses ATP + H2O + cellular proteinSide 1 = ADP + phosphate + cellular proteinSide 2.. Functionally, part of the Sec protein translocase complex. Interacts with the SecYEG preprotein conducting channel. Has a central role in coupling the hydrolysis of ATP to the transfer of proteins into and across the cell membrane, serving both as a receptor for the preprotein-SecB complex and as an ATP-driven molecular motor driving the stepwise translocation of polypeptide chains across the membrane. The polypeptide is Protein translocase subunit SecA (Stutzerimonas stutzeri (strain A1501) (Pseudomonas stutzeri)).